The primary structure comprises 553 residues: MVYICIDTGSHAKGYAVESSDTDYHIYTKCDRETFEKFIDNKELLKNRHAKDESGNDVKYVDLYTGLIGILTGKSPELSMFSKREDFKDKYGIENLQLYEFVTKLMTVSMVKIIYTLMRYKILNNAKGLLQLMFNYVYVEYYLDYKRAPKSTKILNMLFNVGDEIKITMDKNNQLVVNDLNVLDLNKNNGGYKIDETLTLFVKNVKLLKLYVKLMQRGEYQQEWTEYFQQWKQQLQDRLHHVPEPPERTDIRHNIVMYALNERGPVMPEDENKIVYQIYPSVSHLDQGKKGTLADKEIIVQEKLDGCNFRIICNQNKITYGSRNTYRPDGNFMNYYRIRKDLETCMRSLQARFNDGFIVYGELMGWKDDAKTTPINVINYVDQKESLKYYAYEIQLYGGEFVPFVEAQELLTNVGFNTIPCHKYLYNDFVERLNFKSLMFPQSPLEGFIIRCGNLIYKLKSDYKDLNKLKIEKGPFEWLTCDYIKSNCDAIDKSDMMKILIFCYNMCKVKNYNEKLLFNKVFNLFRQQFNLNHNDYKNLYKQYVNMCKCTEYK.

The protein localises to the host cytoplasm. In terms of biological role, may participate in the recruitment of G-actin to the host nucleus. The polypeptide is Protein Early 65 kDa (HE65) (Autographa californica nuclear polyhedrosis virus (AcMNPV)).